We begin with the raw amino-acid sequence, 295 residues long: Protein SSO2 (295 aa).

Residues 1–269 (MSNANPYENN…ARKARKNKIR (269 aa)) are Cytoplasmic-facing. Phosphoserine occurs at positions 31 and 34. Residues 39-100 (AFMNKINSIN…ATDLQYQLKA (62 aa)) are a coiled coil. A t-SNARE coiled-coil homology domain is found at 194–256 (LAEVQARHQE…EQGVGHTNKA (63 aa)). Residues 270-291 (CLIICFIIFAIVVVVVVVPSVV) form a helical; Anchor for type IV membrane protein membrane-spanning segment. Residues 292–295 (ETRK) lie on the Extracellular side of the membrane.

Belongs to the syntaxin family.

It is found in the membrane. Its function is as follows. Required for vesicle fusion with the plasma membrane. The protein is Protein SSO2 (SSO2) of Saccharomyces cerevisiae (strain ATCC 204508 / S288c) (Baker's yeast).